Here is a 361-residue protein sequence, read N- to C-terminus: Elongator complex protein 4 (361 aa).

2 disordered regions span residues 93–124 and 338–361; these read QLPG…PQQE and DDEQ…SLDF. Polar residues-rich tracts occupy residues 104-121 and 346-355; these read NENS…SKNP and ISNTNPQKQP.

The protein belongs to the ELP4 family. In terms of assembly, component of the elongator complex.

Its subcellular location is the cytoplasm. It is found in the nucleus. Its pathway is tRNA modification; 5-methoxycarbonylmethyl-2-thiouridine-tRNA biosynthesis. Its function is as follows. Component of the elongator complex, a multiprotein complex which is required for multiple tRNA modifications, including mcm5U (5-methoxycarbonylmethyl uridine), mcm5s2U (5-methoxycarbonylmethyl-2-thiouridine), and ncm5U (5-carbamoylmethyl uridine). The elongator complex catalyzes formation of carboxymethyluridine in the wobble base at position 34 in tRNAs. The protein is Elongator complex protein 4 of Schizosaccharomyces pombe (strain 972 / ATCC 24843) (Fission yeast).